A 395-amino-acid chain; its full sequence is Phosphoglycerate kinase (395 aa).

Residues 22–24 (DFN), Arg38, 61–64 (HLGR), Arg119, and Arg152 contribute to the substrate site. ATP is bound by residues Lys203, Gly294, Glu325, and 351–354 (GGDT).

It belongs to the phosphoglycerate kinase family. In terms of assembly, monomer.

It is found in the cytoplasm. It catalyses the reaction (2R)-3-phosphoglycerate + ATP = (2R)-3-phospho-glyceroyl phosphate + ADP. It functions in the pathway carbohydrate degradation; glycolysis; pyruvate from D-glyceraldehyde 3-phosphate: step 2/5. In Hydrogenobaculum sp. (strain Y04AAS1), this protein is Phosphoglycerate kinase.